Reading from the N-terminus, the 414-residue chain is Putative polyketide beta-ketoacyl synthase 2 (414 aa).

A Ketosynthase family 3 (KS3) domain is found at 4 to 407 (PRRAVVTGLG…GNNSALVLRR (404 aa)).

Belongs to the thiolase-like superfamily. Beta-ketoacyl-ACP synthases family.

Functionally, involved in developmentally regulated synthesis of a compound biosynthetically related to polyketide antibiotics which is essential for spore color in Streptomyces halstedii. The polypeptide is Putative polyketide beta-ketoacyl synthase 2 (sch2) (Streptomyces halstedii).